We begin with the raw amino-acid sequence, 860 residues long: Leucine--tRNA ligase (860 aa).

The 'HIGH' region motif lies at 42–52 (PYPSGRLHMGH). Residues 619–623 (KMSKS) carry the 'KMSKS' region motif. Residue Lys-622 coordinates ATP.

Belongs to the class-I aminoacyl-tRNA synthetase family.

The protein resides in the cytoplasm. It carries out the reaction tRNA(Leu) + L-leucine + ATP = L-leucyl-tRNA(Leu) + AMP + diphosphate. The sequence is that of Leucine--tRNA ligase from Actinobacillus succinogenes (strain ATCC 55618 / DSM 22257 / CCUG 43843 / 130Z).